The sequence spans 676 residues: Basic proline-rich protein (676 aa).

An N-terminal signal peptide occupies residues 1 to 16 (MLPILLSVALLALSSA). 2 positions are modified to phosphoserine: Ser28 and Ser30. The segment at 29-676 (NSAEKFLRPP…PRPPPGPPPQ (648 aa)) is disordered. Composition is skewed to pro residues over residues 36-50 (RPPP…PPPE), 71-424 (GPAP…PPAD), and 442-676 (PPPA…PPPQ). Positions 409 to 457 (APPGARPPPPPPPPADEPQQGPAPSGDKPKKKPPPPAGPPPPGPPSPGP) are excised as a propeptide.

As to expression, acinar cells and secretory granules of the parotid gland.

The protein resides in the secreted. The parotid hormone stimulates dentinal fluid transport in teeth. The protein is Basic proline-rich protein of Sus scrofa (Pig).